Here is a 98-residue protein sequence, read N- to C-terminus: Parvalbumin beta 1 (98 aa).

N-acetylserine is present on S1. EF-hand domains are found at residues 32-67 (KIGL…FSAG) and 67-98 (GARA…MIKG). Residues D45, D47, S49, F51, E53, E56, D80, D82, D84, K86, and E91 each contribute to the Ca(2+) site.

Belongs to the parvalbumin family.

In terms of biological role, in muscle, parvalbumin is thought to be involved in relaxation after contraction. It binds two calcium ions. The chain is Parvalbumin beta 1 from Macruronus magellanicus (Patagonian grenadier).